Here is an 885-residue protein sequence, read N- to C-terminus: Chromatin structure-remodeling complex protein RSC3 (885 aa).

Residues 14–42 (CVQCRKRKIGCDRVKPICGNCMKHNKMDC) constitute a DNA-binding region (zn(2)-C6 fungal-type). Phosphoserine occurs at positions 95 and 236.

As to quaternary structure, forms a heteromer with RSC30. Interacts with LDB7 and NPL6. Component of the two forms of the RSC complex composed of at least either RSC1 or RSC2, and ARP7, ARP9, LDB7, NPL6, RSC3, RSC30, RSC4, RSC58, RSC6, RSC8, RSC9, SFH1, STH1, HTL1 and probably RTT102. The complexes interact with histone and histone variant components of centromeric chromatin. Component of a fungal-specific module (HTL1-LDB7-NPL6-RSC3-RSC30) within the RSC complex.

Its subcellular location is the nucleus. In terms of biological role, component of the chromatin structure-remodeling complex (RSC), which is involved in transcription regulation and nucleosome positioning. RSC is responsible for the transfer of a histone octamer from a nucleosome core particle to naked DNA. The reaction requires ATP and involves an activated RSC-nucleosome intermediate. Remodeling reaction also involves DNA translocation, DNA twist and conformational change. As a reconfigurer of centromeric and flanking nucleosomes, RSC complex is required both for proper kinetochore function in chromosome segregation and, via a PKC1-dependent signaling pathway, for organization of the cellular cytoskeleton. This subunit is required for transcription of ribosomal protein genes and genes involved in the integrity of the cell wall, and also for proper metaphase progression. Together with HTL1, LDB7, NPL6, RSC30 components, defines a fungal-specific module within the RSC complex that plays a role in many cellular functions including the maintenance of cell wall integrity. The polypeptide is Chromatin structure-remodeling complex protein RSC3 (RSC3) (Saccharomyces cerevisiae (strain ATCC 204508 / S288c) (Baker's yeast)).